A 529-amino-acid polypeptide reads, in one-letter code: Mannuronan C5-epimerase (529 aa).

Residues 1–30 (MGACAMNPQALKGSAMLAAAMLLASGAAMA) form the signal peptide. 6 PbH1 repeats span residues 229-256 (GTET…SISQ), 291-313 (TTGF…DPHD), 315-338 (SHGL…IISR), 340-362 (VNDS…VLDR), 364-386 (SVNN…TLYE), and 387-409 (SGDN…RVRN). H312 serves as the catalytic Proton acceptor.

Belongs to the D-mannuronate C5-epimerase family.

It is found in the periplasm. It carries out the reaction [(1-&gt;4)-beta-D-mannuronosyl](n) = [alginate](n). Its pathway is glycan biosynthesis; alginate biosynthesis. Its function is as follows. Catalyzes the epimerization of beta-D-mannuronate to alpha-L-guluronate during the synthesis of the linear polysaccharide alginate. In addition, is part of a periplasmic protein complex that protects alginate from degradation by AlgL by channeling the newly formed alginate polymer through a scaffold that transfers the alginate polymer through the periplasmic space to the outer membrane secretin AlgE. This is Mannuronan C5-epimerase from Pseudomonas fluorescens.